The chain runs to 420 residues: Meiotically up-regulated gene 137 protein (420 aa).

The region spanning 10 to 232 (NEKPLGDQRA…QNSLTPQKKI (223 aa)) is the BAR domain. The SH3 domain maps to 279-345 (KETVFVKAIY…PVNYCTRIYD (67 aa)). The disordered stretch occupies residues 398–420 (SQNVEASSQPIKIRKPLPEIPNK).

It localises to the cytoplasm. The protein resides in the nucleus. Functionally, has a role in meiosis and sporulation. The chain is Meiotically up-regulated gene 137 protein (mug137) from Schizosaccharomyces pombe (strain 972 / ATCC 24843) (Fission yeast).